We begin with the raw amino-acid sequence, 1171 residues long: DNA-directed RNA polymerase subunit beta (1171 aa).

It belongs to the RNA polymerase beta chain family. As to quaternary structure, the RNAP catalytic core consists of 2 alpha, 1 beta, 1 beta' and 1 omega subunit. When a sigma factor is associated with the core the holoenzyme is formed, which can initiate transcription.

It carries out the reaction RNA(n) + a ribonucleoside 5'-triphosphate = RNA(n+1) + diphosphate. In terms of biological role, DNA-dependent RNA polymerase catalyzes the transcription of DNA into RNA using the four ribonucleoside triphosphates as substrates. In Arthrobacter sp. (strain FB24), this protein is DNA-directed RNA polymerase subunit beta.